Consider the following 72-residue polypeptide: UPF0270 protein YheU (72 aa).

Belongs to the UPF0270 family.

This is UPF0270 protein YheU from Salmonella agona (strain SL483).